The sequence spans 366 residues: MATEKTPDWKIVDLQWAPDLGPVPVQDAMRPTRESQGEQEMIARMWVMCAIQMQDKLCAAKCTKQHFERYRSWLTAEYERFKQPGYPQVPDSRELVDMSNDARLAAMNKLREGVKNTYMWPVIEGPWRVYDNVVDIVEGRVKLVKVLLQDGLLEKFYDWANGLSEVRPLFNRMGRSNSSLRILEIGAGTGGTTARALEGLKSDDGELLYSSYEFTDISPLFFDAARRRFEGYSNIEYRALDISRNAVEQGFEAGAYDLVIASNVLHATPCLVDTLKNVRLLLKPNGFLFNQELSPPGKYVDFMVGLLPGWWLGDADGRAEGPCIPPEEWHRRLEQAGFEGLHAVGFDSDPPYYYNANMIARPAVNA.

Residues T189, D216, and 245–246 each bind S-adenosyl-L-methionine; that span reads NA.

It belongs to the class I-like SAM-binding methyltransferase superfamily.

It functions in the pathway secondary metabolite biosynthesis. Functionally, methyltransferase; part of the gene cluster that mediates the biosynthesis of calbistrin A and related compounds. Calbistrin A is a secondary metabolite with an interesting structure that was recently found to have bioactivity against leukemia cells. It consists of two polyketides linked by an ester bond: a bicyclic decalin containing polyketide and a linear 12 carbon dioic acid structure. The polyketide synthase calA is probably responsible for forming the decalin moiety. Because calA lacks a designated enoylreductase (ER) domain, the required activity is provided by the trans-enoyl reductase calK. Following release from the PKS, calF then probably catalyzes the oxidation and the subsequent Diels Alder cycloisomerization that lead to the formation of the decalin moiety. The decalin polyketide backbone includes two C-methyl groups, at C7 and C11 in backbone, of which the C7 position is probably methylated by the methyltransferase domain of calA. A candidate for adding the methyl group at C11, if not done by CalA, is the cluster methyltransferase calH. Several additional tailoring enzymes within the cluster could be involved in the modification of the decalin polyketide product. Those include the 3 cytochrome P450 monooxygenases CalE, CalG and CalL, of which one might be responsible for the introduction of the extra hydroxyl group attached to the backbone of the decalin moiety, at position C9 in the backbone, that allows for attachment of the linear moiety. One tailoring enzyme activity that is expected to be involved in biosynthesis of calbistrin is an acyltransferase for connecting the two polyketide synthase products, and which could be performed by the cluster acyltransferase calJ. The enzyme responsible for the biosynthesis of the linear moiety, probably a second PKS, has not been identified yet. This is Methyltransferase calH from Penicillium decumbens.